A 189-amino-acid polypeptide reads, in one-letter code: Transcriptional repressor NrdR (189 aa).

A zinc finger spans residues 3 to 34 (CPFCRGDDSRVVDSREVEDGQAIRRRRSCSGC). One can recognise an ATP-cone domain in the interval 46–136 (LSVVKRSGVT…VYRAFSSVED (91 aa)). Residues 152–189 (RLPEGPEAAQGGPESKAGNGQAAGSGDPEGVKAEKSSE) form a disordered region. Positions 180–189 (EGVKAEKSSE) are enriched in basic and acidic residues.

Belongs to the NrdR family. It depends on Zn(2+) as a cofactor.

Its function is as follows. Negatively regulates transcription of bacterial ribonucleotide reductase nrd genes and operons by binding to NrdR-boxes. In Saccharopolyspora erythraea (strain ATCC 11635 / DSM 40517 / JCM 4748 / NBRC 13426 / NCIMB 8594 / NRRL 2338), this protein is Transcriptional repressor NrdR.